Reading from the N-terminus, the 427-residue chain is Enolase (427 aa).

A (2R)-2-phosphoglycerate-binding site is contributed by Gln-163. Glu-205 functions as the Proton donor in the catalytic mechanism. Mg(2+)-binding residues include Asp-242, Glu-285, and Asp-312. Residues Lys-337, Arg-366, Ser-367, and Lys-388 each coordinate (2R)-2-phosphoglycerate. Lys-337 serves as the catalytic Proton acceptor.

The protein belongs to the enolase family. The cofactor is Mg(2+).

It localises to the cytoplasm. Its subcellular location is the secreted. The protein localises to the cell surface. The enzyme catalyses (2R)-2-phosphoglycerate = phosphoenolpyruvate + H2O. Its pathway is carbohydrate degradation; glycolysis; pyruvate from D-glyceraldehyde 3-phosphate: step 4/5. Functionally, catalyzes the reversible conversion of 2-phosphoglycerate (2-PG) into phosphoenolpyruvate (PEP). It is essential for the degradation of carbohydrates via glycolysis. The polypeptide is Enolase (Paraburkholderia xenovorans (strain LB400)).